The primary structure comprises 170 residues: Adenine phosphoribosyltransferase (170 aa).

The protein belongs to the purine/pyrimidine phosphoribosyltransferase family. As to quaternary structure, homodimer.

The protein resides in the cytoplasm. It catalyses the reaction AMP + diphosphate = 5-phospho-alpha-D-ribose 1-diphosphate + adenine. It participates in purine metabolism; AMP biosynthesis via salvage pathway; AMP from adenine: step 1/1. In terms of biological role, catalyzes a salvage reaction resulting in the formation of AMP, that is energically less costly than de novo synthesis. This chain is Adenine phosphoribosyltransferase, found in Symbiobacterium thermophilum (strain DSM 24528 / JCM 14929 / IAM 14863 / T).